A 183-amino-acid chain; its full sequence is Glutamyl-tRNA(Gln) amidotransferase subunit F, mitochondrial (183 aa).

The N-terminal 23 residues, methionine 1 to tyrosine 23, are a transit peptide targeting the mitochondrion.

It belongs to the GatF family. As to quaternary structure, subunit of the heterotrimeric GatFAB amidotransferase (AdT) complex, composed of A, B and F subunits.

It is found in the mitochondrion inner membrane. It catalyses the reaction L-glutamyl-tRNA(Gln) + L-glutamine + ATP + H2O = L-glutaminyl-tRNA(Gln) + L-glutamate + ADP + phosphate + H(+). Allows the formation of correctly charged Gln-tRNA(Gln) through the transamidation of misacylated Glu-tRNA(Gln) in the mitochondria. The reaction takes place in the presence of glutamine and ATP through an activated gamma-phospho-Glu-tRNA(Gln). Required for proper protein synthesis within the mitochondrion. This chain is Glutamyl-tRNA(Gln) amidotransferase subunit F, mitochondrial, found in Debaryomyces hansenii (strain ATCC 36239 / CBS 767 / BCRC 21394 / JCM 1990 / NBRC 0083 / IGC 2968) (Yeast).